A 476-amino-acid chain; its full sequence is Glycogen synthase (476 aa).

Residue Lys15 coordinates ADP-alpha-D-glucose.

This sequence belongs to the glycosyltransferase 1 family. Bacterial/plant glycogen synthase subfamily.

It catalyses the reaction [(1-&gt;4)-alpha-D-glucosyl](n) + ADP-alpha-D-glucose = [(1-&gt;4)-alpha-D-glucosyl](n+1) + ADP + H(+). It functions in the pathway glycan biosynthesis; glycogen biosynthesis. Synthesizes alpha-1,4-glucan chains using ADP-glucose. This Streptococcus sanguinis (strain SK36) protein is Glycogen synthase.